A 495-amino-acid polypeptide reads, in one-letter code: Trimethylamine methyltransferase MttB (495 aa).

A non-standard amino acid (pyrrolysine) is located at residue O334.

This sequence belongs to the trimethylamine methyltransferase family.

It carries out the reaction Co(I)-[trimethylamine-specific corrinoid protein] + trimethylamine + H(+) = methyl-Co(III)-[trimethylamine-specific corrinoid protein] + dimethylamine. It functions in the pathway one-carbon metabolism; methanogenesis from trimethylamine. Functionally, catalyzes the transfer of a methyl group from trimethylamine to the corrinoid cofactor of MttC. This Methanosarcina barkeri (strain Fusaro / DSM 804) protein is Trimethylamine methyltransferase MttB (mttB).